Reading from the N-terminus, the 335-residue chain is 2-keto-3-deoxygluconate permease (335 aa).

10 helical membrane-spanning segments follow: residues 10 to 30 (IPGGLMLVPLLLGAILHTAAP), 42 to 62 (GIITGTLPILSVWFFCIGASI), 77 to 97 (LVLTKIAVAWVVALIAAQLLP), 100 to 120 (GIEVGMLAGLSTLALVSAMDM), 141 to 161 (AFVLMSVESGPLMTMVILGSA), 163 to 183 (LASFQPHHFVGAVLPFLIGFA), 200 to 220 (QTLIPFFGFALGNTINLGVIL), 224 to 244 (LLGIAMGLLVIVVTGIPLIIA), 254 to 274 (TAGLAASSTAGAAVANPVIIA), and 289 to 309 (ALVATCVIVTSILVPILTAMY).

The protein belongs to the KdgT transporter family.

Its subcellular location is the cell inner membrane. It carries out the reaction 2-dehydro-3-deoxy-D-gluconate(in) + H(+)(in) = 2-dehydro-3-deoxy-D-gluconate(out) + H(+)(out). Functionally, catalyzes the proton-dependent uptake of 2-keto-3-deoxygluconate (KDG) into the cell. The chain is 2-keto-3-deoxygluconate permease from Tolumonas auensis (strain DSM 9187 / NBRC 110442 / TA 4).